The primary structure comprises 966 residues: Translation initiation factor IF-2 (966 aa).

Basic and acidic residues-rich tracts occupy residues 99 to 113 (KRDE…EAAD), 123 to 183 (EQAR…KAEE), 197 to 212 (DASR…RVAV), 220 to 249 (AADD…EAEA), and 266 to 277 (PSERKAEEKKAE). Residues 99 to 382 (KRDEAGADQH…NFQAPTEPVV (284 aa)) form a disordered region. The segment covering 304-315 (AATTTTTTATTT) has biased composition (low complexity). Residues 346-359 (SSGGVGGWRGGPRG) are compositionally biased toward gly residues. Positions 466 to 635 (PRPPVVTVMG…LLQAEVLELK (170 aa)) constitute a tr-type G domain. The interval 475–482 (GHVDHGKT) is G1. Residue 475–482 (GHVDHGKT) participates in GTP binding. The segment at 500-504 (GITQH) is G2. The segment at 521-524 (DTPG) is G3. GTP contacts are provided by residues 521–525 (DTPGH) and 575–578 (NKID). The segment at 575-578 (NKID) is G4. Residues 611–613 (SAK) form a G5 region.

Belongs to the TRAFAC class translation factor GTPase superfamily. Classic translation factor GTPase family. IF-2 subfamily.

The protein localises to the cytoplasm. In terms of biological role, one of the essential components for the initiation of protein synthesis. Protects formylmethionyl-tRNA from spontaneous hydrolysis and promotes its binding to the 30S ribosomal subunits. Also involved in the hydrolysis of GTP during the formation of the 70S ribosomal complex. In Cupriavidus pinatubonensis (strain JMP 134 / LMG 1197) (Cupriavidus necator (strain JMP 134)), this protein is Translation initiation factor IF-2.